A 225-amino-acid chain; its full sequence is UPF0758 protein Sez_1052 (225 aa).

One can recognise an MPN domain in the interval 102–224 (PVLSSAQVAE…YYSFREKSDL (123 aa)). Residues His173, His175, and Asp186 each coordinate Zn(2+). Residues 173-186 (HNHPSGLTKPSAND) carry the JAMM motif motif.

It belongs to the UPF0758 family.

This is UPF0758 protein Sez_1052 from Streptococcus equi subsp. zooepidemicus (strain MGCS10565).